Here is a 358-residue protein sequence, read N- to C-terminus: Peptide chain release factor 1 (358 aa).

Glutamine 233 is modified (N5-methylglutamine).

This sequence belongs to the prokaryotic/mitochondrial release factor family. In terms of processing, methylated by PrmC. Methylation increases the termination efficiency of RF1.

It is found in the cytoplasm. In terms of biological role, peptide chain release factor 1 directs the termination of translation in response to the peptide chain termination codons UAG and UAA. The protein is Peptide chain release factor 1 of Geobacillus kaustophilus (strain HTA426).